A 552-amino-acid polypeptide reads, in one-letter code: Hyaluronan synthase 2 (552 aa).

Over 1-11 (MHCERFLCVLR) the chain is Cytoplasmic. A helical membrane pass occupies residues 12-32 (IIGTTLFGVSLLLGITAAYIV). The Extracellular portion of the chain corresponds to 33–45 (GYQFIQTDNYYFS). A helical membrane pass occupies residues 46 to 66 (FGLYGAFLASHLIIQSLFAFL). Topologically, residues 67 to 374 (EHRKMKKSLE…NAMWFHKHHL (308 aa)) are cytoplasmic. A Phosphothreonine modification is found at threonine 110. Residue lysine 190 forms a Glycyl lysine isopeptide (Lys-Gly) (interchain with G-Cter in ubiquitin) linkage. Serine 221 carries O-linked (GlcNAc) serine glycosylation. Residue threonine 328 is modified to Phosphothreonine. Residues 375-395 (WMTYEAVITGFFPFFLIATVI) form a helical membrane-spanning segment. The Extracellular portion of the chain corresponds to 396 to 402 (QLFYRGK). A helical membrane pass occupies residues 403–423 (IWNILLFLLTVQLVGLIKSSF). Over 424-429 (ASCLRG) the chain is Cytoplasmic. Residues 430 to 450 (NIVMVFMSLYSVLYMSSLLPA) form a helical membrane-spanning segment. Topologically, residues 451-475 (KMFAIATINKAGWGTSGRKTIVVNF) are extracellular. A helical membrane pass occupies residues 476–496 (IGLIPVSVWFTILLGGVIFTI). The Cytoplasmic segment spans residues 497 to 510 (YKESKKPFSESKQT). Residues 511 to 531 (VLIVGTLIYACYWVVLLTLYV) form a helical membrane-spanning segment. Residues 532–552 (VLINKCGRRKKGQQYDMVLDV) are Extracellular-facing.

It belongs to the NodC/HAS family. In terms of assembly, homodimer; dimerization promotes enzymatic activity. Forms heterodimer with HAS3. Forms heterodimer with HAS1. The cofactor is Mg(2+). In terms of processing, phosphorylation at Thr-328 is essential for hyaluronan synthase activity. O-GlcNAcylation at Ser-221 increases the stability of HAS2 and plasma membrane localization. Post-translationally, ubiquitination at Lys-190; this ubiquitination is essential for hyaluronan synthase activity and homo- or hetero-oligomerization. Can also be poly-ubiquitinated. Deubiquitinated by USP17L22/USP17 and USP4. USP17L22/USP17 efficiently removes 'Lys-63'- and 'Lys-48'-linked polyubiquitin chains, whereas USP4 preferentially removes monoubiquitination and, partially, both 'Lys-63'- and 'Lys-48'-linked polyubiquitin chain.

The protein resides in the cell membrane. Its subcellular location is the endoplasmic reticulum membrane. The protein localises to the vesicle. It is found in the golgi apparatus membrane. It localises to the lysosome. It catalyses the reaction [hyaluronan](n) + UDP-N-acetyl-alpha-D-glucosamine = N-acetyl-beta-D-glucosaminyl-(1-&gt;4)-[hyaluronan](n) + UDP + H(+). It carries out the reaction N-acetyl-beta-D-glucosaminyl-(1-&gt;4)-[hyaluronan](n) + UDP-alpha-D-glucuronate = [hyaluronan](n+1) + UDP + H(+). The protein operates within glycan biosynthesis; hyaluronan biosynthesis. Catalyzes the addition of GlcNAc or GlcUA monosaccharides to the nascent hyaluronan polymer. Therefore, it is essential to hyaluronan synthesis a major component of most extracellular matrices that has a structural role in tissues architectures and regulates cell adhesion, migration and differentiation. This is one of three isoenzymes responsible for cellular hyaluronan synthesis and it is particularly responsible for the synthesis of high molecular mass hyaluronan. This Rattus norvegicus (Rat) protein is Hyaluronan synthase 2 (Has2).